The primary structure comprises 101 residues: MAKQSMKAREAKRAKLVTKFAEKRAALKVLISDVNASEEDRWNAVLKLQSLPRDSSASRQRNRCNQTGRPHGYLRKFGLSRIKVREACMKGEIPGLRKASW.

The protein belongs to the universal ribosomal protein uS14 family. As to quaternary structure, part of the 30S ribosomal subunit. Contacts proteins S3 and S10.

Binds 16S rRNA, required for the assembly of 30S particles and may also be responsible for determining the conformation of the 16S rRNA at the A site. The polypeptide is Small ribosomal subunit protein uS14 (Aliivibrio salmonicida (strain LFI1238) (Vibrio salmonicida (strain LFI1238))).